Consider the following 262-residue polypeptide: tRNA pseudouridine synthase A 2 (262 aa).

Asp66 serves as the catalytic Nucleophile. Tyr125 contributes to the substrate binding site.

It belongs to the tRNA pseudouridine synthase TruA family. As to quaternary structure, homodimer.

It catalyses the reaction uridine(38/39/40) in tRNA = pseudouridine(38/39/40) in tRNA. Functionally, formation of pseudouridine at positions 38, 39 and 40 in the anticodon stem and loop of transfer RNAs. This is tRNA pseudouridine synthase A 2 from Protochlamydia amoebophila (strain UWE25).